An 846-amino-acid polypeptide reads, in one-letter code: Aminopeptidase N (846 aa).

Residues Glu-120 and 252 to 256 contribute to the substrate site; that span reads GAMEN. His-288 is a Zn(2+) binding site. Catalysis depends on Glu-289, which acts as the Proton acceptor. His-292 and Glu-311 together coordinate Zn(2+).

It belongs to the peptidase M1 family. Monomer. It depends on Zn(2+) as a cofactor.

Its subcellular location is the cytoplasm. The enzyme catalyses Release of an N-terminal amino acid, Xaa-|-Yaa- from a peptide, amide or arylamide. Xaa is preferably Ala, but may be most amino acids including Pro (slow action). When a terminal hydrophobic residue is followed by a prolyl residue, the two may be released as an intact Xaa-Pro dipeptide.. Functionally, aminopeptidase with broad substrate specificity to several peptides. It has more affinity for oligopeptides than for dipeptides. It plays an essential role in the metabolism, it may be involved in nitrogen supply or protein turnover. In Lactococcus lactis subsp. lactis (strain IL1403) (Streptococcus lactis), this protein is Aminopeptidase N (pepN).